A 441-amino-acid polypeptide reads, in one-letter code: Glutamate-1-semialdehyde 2,1-aminomutase (441 aa).

Residue K273 is modified to N6-(pyridoxal phosphate)lysine.

Belongs to the class-III pyridoxal-phosphate-dependent aminotransferase family. HemL subfamily. Requires pyridoxal 5'-phosphate as cofactor.

Its subcellular location is the cytoplasm. The catalysed reaction is (S)-4-amino-5-oxopentanoate = 5-aminolevulinate. The protein operates within porphyrin-containing compound metabolism; protoporphyrin-IX biosynthesis; 5-aminolevulinate from L-glutamyl-tRNA(Glu): step 2/2. In Pyrobaculum calidifontis (strain DSM 21063 / JCM 11548 / VA1), this protein is Glutamate-1-semialdehyde 2,1-aminomutase.